The sequence spans 467 residues: Inactive pancreatic lipase-related protein 1 (467 aa).

The N-terminal stretch at 1–17 is a signal peptide; it reads MVSIWTIALFLLGAAKA. 2 cysteine pairs are disulfide-bonded: cysteine 21-cysteine 27 and cysteine 109-cysteine 120. The N-linked (GlcNAc...) asparagine glycan is linked to asparagine 157. Serine 171 (nucleophile) is an active-site residue. Aspartate 194 serves as the catalytic Charge relay system. Residues glutamate 205, arginine 208, aspartate 210, and aspartate 213 each contribute to the Ca(2+) site. A disulfide bridge links cysteine 255 with cysteine 279. The active-site Charge relay system is the histidine 281. Intrachain disulfides connect cysteine 303–cysteine 314, cysteine 317–cysteine 322, and cysteine 451–cysteine 467. Residues 356–467 form the PLAT domain; sequence WRYGVSITLS…EDVLLTLTPC (112 aa).

The protein belongs to the AB hydrolase superfamily. Lipase family. Detected in pancreas (at protein level).

It is found in the secreted. In terms of biological role, may function as inhibitor of dietary triglyceride digestion. Lacks detectable lipase activity towards triglycerides, diglycerides, phosphatidylcholine, galactolipids or cholesterol esters (in vitro). This is Inactive pancreatic lipase-related protein 1 (PNLIPRP1) from Canis lupus familiaris (Dog).